Consider the following 269-residue polypeptide: Flagellar brake protein YcgR (269 aa).

The tract at residues 1–42 is disordered; that stretch reads MLREPMNQHDAPGPAETGADSDAETDAETDAETDAGAADDRY. Positions 19 to 33 are enriched in acidic residues; the sequence is ADSDAETDAETDAET. Residues 149 to 261 enclose the PilZ domain; sequence QRRRHFRART…MENFLQRLVF (113 aa).

The protein belongs to the YcgR family. In terms of assembly, monomer. Interacts with the flagellar basal bodies.

The protein resides in the bacterial flagellum basal body. In terms of biological role, acts as a flagellar brake, regulating swimming and swarming in a bis-(3'-5') cyclic diguanylic acid (c-di-GMP)-dependent manner. Binds 1 c-di-GMP dimer per subunit. Increasing levels of c-di-GMP lead to decreased motility. The sequence is that of Flagellar brake protein YcgR from Cupriavidus taiwanensis (strain DSM 17343 / BCRC 17206 / CCUG 44338 / CIP 107171 / LMG 19424 / R1) (Ralstonia taiwanensis (strain LMG 19424)).